Consider the following 360-residue polypeptide: Nicotinate-nucleotide--dimethylbenzimidazole phosphoribosyltransferase (360 aa).

The active-site Proton acceptor is the Glu-327.

The protein belongs to the CobT family.

The enzyme catalyses 5,6-dimethylbenzimidazole + nicotinate beta-D-ribonucleotide = alpha-ribazole 5'-phosphate + nicotinate + H(+). Its pathway is nucleoside biosynthesis; alpha-ribazole biosynthesis; alpha-ribazole from 5,6-dimethylbenzimidazole: step 1/2. Its function is as follows. Catalyzes the synthesis of alpha-ribazole-5'-phosphate from nicotinate mononucleotide (NAMN) and 5,6-dimethylbenzimidazole (DMB). The sequence is that of Nicotinate-nucleotide--dimethylbenzimidazole phosphoribosyltransferase from Shewanella baltica (strain OS223).